The chain runs to 558 residues: uncharacterized protein (558 aa).

Positions 396–420 (SSITDNDTDNDSGATESQQTDSEND) are disordered. Positions 407–416 (SGATESQQTD) are enriched in polar residues.

The protein belongs to the chlamydial CPn_0065/CT_288/TC_0561 family.

This is an uncharacterized protein from Chlamydia muridarum (strain MoPn / Nigg).